Consider the following 294-residue polypeptide: Acetyl-coenzyme A carboxylase carboxyl transferase subunit beta (294 aa).

The CoA carboxyltransferase N-terminal domain occupies 30 to 294 (IMTKCPECKK…PEVGGEADGE (265 aa)). Residues Cys34, Cys37, Cys53, and Cys56 each coordinate Zn(2+). Residues 34–56 (CPECKKIMYTKELQKNLMVCNYC) form a C4-type zinc finger.

This sequence belongs to the AccD/PCCB family. Acetyl-CoA carboxylase is a heterohexamer composed of biotin carboxyl carrier protein (AccB), biotin carboxylase (AccC) and two subunits each of ACCase subunit alpha (AccA) and ACCase subunit beta (AccD). Zn(2+) serves as cofactor.

The protein resides in the cytoplasm. It catalyses the reaction N(6)-carboxybiotinyl-L-lysyl-[protein] + acetyl-CoA = N(6)-biotinyl-L-lysyl-[protein] + malonyl-CoA. It functions in the pathway lipid metabolism; malonyl-CoA biosynthesis; malonyl-CoA from acetyl-CoA: step 1/1. Functionally, component of the acetyl coenzyme A carboxylase (ACC) complex. Biotin carboxylase (BC) catalyzes the carboxylation of biotin on its carrier protein (BCCP) and then the CO(2) group is transferred by the transcarboxylase to acetyl-CoA to form malonyl-CoA. The polypeptide is Acetyl-coenzyme A carboxylase carboxyl transferase subunit beta (Listeria monocytogenes serotype 4a (strain HCC23)).